Here is a 1316-residue protein sequence, read N- to C-terminus: DNA-directed RNA polymerase subunit beta' (1316 aa).

4 residues coordinate Zn(2+): C60, C62, C75, and C78. Residues D535, D537, and D539 each contribute to the Mg(2+) site. Zn(2+)-binding residues include C891, C968, C975, and C978.

The protein belongs to the RNA polymerase beta' chain family. In terms of assembly, the RNAP catalytic core consists of 2 alpha, 1 beta, 1 beta' and 1 omega subunit. When a sigma factor is associated with the core the holoenzyme is formed, which can initiate transcription. Mg(2+) is required as a cofactor. Zn(2+) serves as cofactor.

It catalyses the reaction RNA(n) + a ribonucleoside 5'-triphosphate = RNA(n+1) + diphosphate. Its function is as follows. DNA-dependent RNA polymerase catalyzes the transcription of DNA into RNA using the four ribonucleoside triphosphates as substrates. The polypeptide is DNA-directed RNA polymerase subunit beta' (Mycobacterium tuberculosis (strain CDC 1551 / Oshkosh)).